The chain runs to 218 residues: Thiopurine S-methyltransferase (218 aa).

S-adenosyl-L-methionine contacts are provided by tryptophan 10, leucine 45, glutamate 66, and arginine 123.

It belongs to the class I-like SAM-binding methyltransferase superfamily. TPMT family.

The protein localises to the cytoplasm. It carries out the reaction S-adenosyl-L-methionine + a thiopurine = S-adenosyl-L-homocysteine + a thiopurine S-methylether.. The protein is Thiopurine S-methyltransferase of Shewanella sp. (strain MR-7).